We begin with the raw amino-acid sequence, 59 residues long: uncharacterized protein (59 aa).

This is an uncharacterized protein from Treponema pallidum (strain Nichols).